The following is a 33-amino-acid chain: Photosystem II reaction center protein Psb30 (33 aa).

A helical transmembrane segment spans residues 5–25 (LIVQLGSLTLITLAGPLVVVL).

The protein belongs to the Psb30/Ycf12 family. As to quaternary structure, PSII is composed of 1 copy each of membrane proteins PsbA, PsbB, PsbC, PsbD, PsbE, PsbF, PsbH, PsbI, PsbJ, PsbK, PsbL, PsbM, PsbT, PsbY, PsbZ, Psb30/Ycf12, peripheral proteins of the oxygen-evolving complex and a large number of cofactors. It forms dimeric complexes.

The protein localises to the plastid. Its subcellular location is the chloroplast thylakoid membrane. Its function is as follows. A core subunit of photosystem II (PSII), probably helps stabilize the reaction center. This Euglena deses protein is Photosystem II reaction center protein Psb30.